A 77-amino-acid polypeptide reads, in one-letter code: DNA-directed RNA polymerase subunit epsilon (77 aa).

It belongs to the RNA polymerase subunit epsilon family. In terms of assembly, RNAP is composed of a core of 2 alpha, a beta and a beta' subunit. The core is associated with a delta subunit, and at least one of epsilon or omega. When a sigma factor is associated with the core the holoenzyme is formed, which can initiate transcription.

It catalyses the reaction RNA(n) + a ribonucleoside 5'-triphosphate = RNA(n+1) + diphosphate. In terms of biological role, a non-essential component of RNA polymerase (RNAP). The protein is DNA-directed RNA polymerase subunit epsilon of Streptococcus pneumoniae (strain P1031).